The primary structure comprises 189 residues: Tetratricopeptide repeat protein 36 (189 aa).

TPR repeat units lie at residues 51 to 84, 86 to 118, and 123 to 156; these read SKAL…LPER, SAYN…SGGR, and RQSF…GSPF.

Belongs to the TTC36 family.

The sequence is that of Tetratricopeptide repeat protein 36 (TTC36) from Homo sapiens (Human).